A 163-amino-acid polypeptide reads, in one-letter code: 2-C-methyl-D-erythritol 2,4-cyclodiphosphate synthase (163 aa).

Positions 15 and 17 each coordinate a divalent metal cation. Residues 15-17 (DFH) and 41-42 (HS) each bind 4-CDP-2-C-methyl-D-erythritol 2-phosphate. Residue histidine 49 participates in a divalent metal cation binding. Residues 63–65 (DIG) and 139–142 (TTNE) each bind 4-CDP-2-C-methyl-D-erythritol 2-phosphate.

This sequence belongs to the IspF family. Homotrimer. The cofactor is a divalent metal cation.

It catalyses the reaction 4-CDP-2-C-methyl-D-erythritol 2-phosphate = 2-C-methyl-D-erythritol 2,4-cyclic diphosphate + CMP. The protein operates within isoprenoid biosynthesis; isopentenyl diphosphate biosynthesis via DXP pathway; isopentenyl diphosphate from 1-deoxy-D-xylulose 5-phosphate: step 4/6. In terms of biological role, involved in the biosynthesis of isopentenyl diphosphate (IPP) and dimethylallyl diphosphate (DMAPP), two major building blocks of isoprenoid compounds. Catalyzes the conversion of 4-diphosphocytidyl-2-C-methyl-D-erythritol 2-phosphate (CDP-ME2P) to 2-C-methyl-D-erythritol 2,4-cyclodiphosphate (ME-CPP) with a corresponding release of cytidine 5-monophosphate (CMP). The chain is 2-C-methyl-D-erythritol 2,4-cyclodiphosphate synthase from Gloeobacter violaceus (strain ATCC 29082 / PCC 7421).